The following is a 234-amino-acid chain: Dienlactone hydrolase 2 (234 aa).

Active-site residues include cysteine 143, aspartate 167, and histidine 199.

Belongs to the dienelactone hydrolase family.

It functions in the pathway xenobiotic degradation. Functionally, dienlactone hydrolase; part of the Fusarium detoxification of benzoxazolinone cluster 2 (FDB2) involved in the degradation of benzoxazolinones produced by the host plant. Maize, wheat, and rye produce the 2 benzoxazinone phytoanticipins 2,4-dihy-droxy-7-methoxy-1,4-benzoxazin-3-one (DIMBOA) and 2,4-dihydroxy-1,4-benzoxazin-3-one (DIBOA) that, due to their inherent instability once released, spontaneously degrade to the more stable corresponding benzoxazolinones, 6-methoxy-2-benzoxazolinone (MBOA) and 2-benzoxazolinone (BOA), respectively. The first step in the detoxification of benzoxazolinones involves the hydrolysis of the cyclic ester bond of benzoxazolinones by the FDB1 cluster gamma-lactamase MBL1 to aminophenols. MBL1 is able to convert BOA into 2-aminophenol (2-AP), as well as MBOA into 5-methoxy-2-aminophenol (2-AMP). The FDB2 cluster N-malonyltransferase FDB2/NAT1 then metabolizes aminophenols via N-malonylation to non-toxic malonamic acids. FDB2/NAT1 converts 2-AP into N-(2-hydroxyphenyl) malonamic acid (HPMA) and 2-AMP into N-(2-hydroxy-4-methoxyphenyl) malonamic acid (HMPMA). The duplicated dienlactone hydrolases DLH1 and DLH2 may provide redundant function for hydrolyzing the lactone moiety in the BOA molecule. The roles of the amidases and other enzymes encoded by the 2 FDB clusters have not been identified so far. The chain is Dienlactone hydrolase 2 from Gibberella moniliformis (strain M3125 / FGSC 7600) (Maize ear and stalk rot fungus).